A 148-amino-acid polypeptide reads, in one-letter code: Large ribosomal subunit protein bL9 (148 aa).

This sequence belongs to the bacterial ribosomal protein bL9 family.

In terms of biological role, binds to the 23S rRNA. This chain is Large ribosomal subunit protein bL9, found in Prosthecochloris aestuarii (strain DSM 271 / SK 413).